The following is a 103-amino-acid chain: Protamine-2 (103 aa).

Residues 1-103 (MVRYRMRSLS…RTRRRRCRRH (103 aa)) form a disordered region. Phosphoserine is present on residues Ser-8 and Ser-10. A compositionally biased stretch (basic and acidic residues) spans 8–17 (SLSERPHEVH). Over residues 18-29 (GQQVHGQDQGHN) the composition is skewed to low complexity. Positions 48–103 (HRGHSHHRRRRCSRRRLHRIHRRRHRSCRRRRRRSCRHRRRHRRGCRTRRRRCRRH) are enriched in basic residues.

Belongs to the protamine P2 family. As to quaternary structure, interacts with TDRP. Proteolytic processing into mature chains is required for histone eviction during spermatogenesis. Transition proteins (TNP1 and TNP2) are required for processing. As to expression, testis.

The protein resides in the nucleus. Its subcellular location is the chromosome. Functionally, protamines substitute for histones in the chromatin of sperm during the haploid phase of spermatogenesis. They compact sperm DNA into a highly condensed, stable and inactive complex. This chain is Protamine-2 (PRM2), found in Macaca nemestrina (Pig-tailed macaque).